Reading from the N-terminus, the 186-residue chain is Elongation factor P (186 aa).

Belongs to the elongation factor P family.

Its subcellular location is the cytoplasm. The protein operates within protein biosynthesis; polypeptide chain elongation. Involved in peptide bond synthesis. Stimulates efficient translation and peptide-bond synthesis on native or reconstituted 70S ribosomes in vitro. Probably functions indirectly by altering the affinity of the ribosome for aminoacyl-tRNA, thus increasing their reactivity as acceptors for peptidyl transferase. The polypeptide is Elongation factor P (Prochlorococcus marinus (strain MIT 9515)).